A 772-amino-acid polypeptide reads, in one-letter code: Annulin (772 aa).

Residues C4 and C5 are each lipidated (S-palmitoyl cysteine). Residues 15–57 (NEGSGGGIPLMPVRGGSTRRPDSLPKPPAAVVPSPPSPGDVPD) form a disordered region. Residues 38-53 (LPKPPAAVVPSPPSPG) show a composition bias toward pro residues. Residues H400 and D427 contribute to the active site. N467, D469, E517, and E522 together coordinate Ca(2+).

The protein belongs to the transglutaminase superfamily. Transglutaminase family. Ca(2+) serves as cofactor. As to expression, has an annular, or ring-like expression pattern in epithelial annuli of developing limb segment boundary cells. In embryos, it is seen in gastrulating cells, in cells surrounding rapidly dividing neuroblasts, and in muscle pioneer cells invaginating to form apodemes.

It localises to the cell membrane. It carries out the reaction L-glutaminyl-[protein] + L-lysyl-[protein] = [protein]-L-lysyl-N(6)-5-L-glutamyl-[protein] + NH4(+). In terms of biological role, participates in morphogenetic activities of the cells, maybe by stabilizing the membrane or subcortical structures of cells that are under mechanical stress. Probably catalyzes the cross-linking of proteins and the conjugation of polyamines to proteins. The polypeptide is Annulin (Schistocerca americana (American grasshopper)).